Here is a 254-residue protein sequence, read N- to C-terminus: Imidazole glycerol phosphate synthase subunit HisF (254 aa).

Active-site residues include D12 and D131.

It belongs to the HisA/HisF family. In terms of assembly, heterodimer of HisH and HisF.

Its subcellular location is the cytoplasm. It catalyses the reaction 5-[(5-phospho-1-deoxy-D-ribulos-1-ylimino)methylamino]-1-(5-phospho-beta-D-ribosyl)imidazole-4-carboxamide + L-glutamine = D-erythro-1-(imidazol-4-yl)glycerol 3-phosphate + 5-amino-1-(5-phospho-beta-D-ribosyl)imidazole-4-carboxamide + L-glutamate + H(+). It participates in amino-acid biosynthesis; L-histidine biosynthesis; L-histidine from 5-phospho-alpha-D-ribose 1-diphosphate: step 5/9. Its function is as follows. IGPS catalyzes the conversion of PRFAR and glutamine to IGP, AICAR and glutamate. The HisF subunit catalyzes the cyclization activity that produces IGP and AICAR from PRFAR using the ammonia provided by the HisH subunit. This Frankia casuarinae (strain DSM 45818 / CECT 9043 / HFP020203 / CcI3) protein is Imidazole glycerol phosphate synthase subunit HisF.